We begin with the raw amino-acid sequence, 257 residues long: UPF0246 protein ASA_3634 (257 aa).

The protein belongs to the UPF0246 family.

This Aeromonas salmonicida (strain A449) protein is UPF0246 protein ASA_3634.